The chain runs to 218 residues: Adenylate kinase (218 aa).

12–17 (GAGKGT) provides a ligand contact to ATP. The interval 32–61 (STGDMLREARSSGTEMGKRVAEVMDRGELV) is NMP. AMP-binding positions include threonine 33, arginine 38, 59–61 (ELV), 85–88 (GFPR), and glutamine 92. An LID region spans residues 126-164 (GRFTCGNCGEVYHDVTKPTKEPGKCDVCGSTDLRRRADD). Arginine 127 serves as a coordination point for ATP. Zn(2+)-binding residues include cysteine 130 and cysteine 133. An ATP-binding site is contributed by 136 to 137 (VY). Zn(2+)-binding residues include cysteine 150 and cysteine 153. AMP contacts are provided by arginine 161 and arginine 172. Alanine 200 lines the ATP pocket.

It belongs to the adenylate kinase family. In terms of assembly, monomer.

The protein resides in the cytoplasm. The catalysed reaction is AMP + ATP = 2 ADP. It participates in purine metabolism; AMP biosynthesis via salvage pathway; AMP from ADP: step 1/1. Catalyzes the reversible transfer of the terminal phosphate group between ATP and AMP. Plays an important role in cellular energy homeostasis and in adenine nucleotide metabolism. The sequence is that of Adenylate kinase from Paracoccus denitrificans (strain Pd 1222).